The primary structure comprises 301 residues: Cytidine deaminase 1 (301 aa).

CMP/dCMP-type deaminase domains are found at residues 23–156 (SVIQ…FGPD) and 188–301 (DSSA…CYEA). 64-66 (NVE) serves as a coordination point for substrate. H77 serves as a coordination point for Zn(2+). The Proton donor role is filled by E79. Residues C104 and C107 each contribute to the Zn(2+) site.

This sequence belongs to the cytidine and deoxycytidylate deaminase family. Homodimer. Requires Zn(2+) as cofactor. As to expression, expressed in roots, rosette leaves, stems and flowers.

It catalyses the reaction cytidine + H2O + H(+) = uridine + NH4(+). The enzyme catalyses 2'-deoxycytidine + H2O + H(+) = 2'-deoxyuridine + NH4(+). Inhibited by uridine, CMP and dCMP. Its function is as follows. This enzyme scavenges exogenous and endogenous cytidine and 2'-deoxycytidine for UMP synthesis. Functions as a conventional cytidine deaminase. Has no affinity for RNA and is not involved in RNA-editing by C-to-U deamination. This Arabidopsis thaliana (Mouse-ear cress) protein is Cytidine deaminase 1 (CDA1).